Here is a 272-residue protein sequence, read N- to C-terminus: Indole-3-glycerol phosphate synthase (272 aa).

The protein belongs to the TrpC family.

The enzyme catalyses 1-(2-carboxyphenylamino)-1-deoxy-D-ribulose 5-phosphate + H(+) = (1S,2R)-1-C-(indol-3-yl)glycerol 3-phosphate + CO2 + H2O. It participates in amino-acid biosynthesis; L-tryptophan biosynthesis; L-tryptophan from chorismate: step 4/5. In Mycobacterium tuberculosis (strain ATCC 25177 / H37Ra), this protein is Indole-3-glycerol phosphate synthase.